The following is a 233-amino-acid chain: Large ribosomal subunit protein uL1 (233 aa).

This sequence belongs to the universal ribosomal protein uL1 family. Part of the 50S ribosomal subunit.

In terms of biological role, binds directly to 23S rRNA. The L1 stalk is quite mobile in the ribosome, and is involved in E site tRNA release. Functionally, protein L1 is also a translational repressor protein, it controls the translation of the L11 operon by binding to its mRNA. This chain is Large ribosomal subunit protein uL1, found in Finegoldia magna (strain ATCC 29328 / DSM 20472 / WAL 2508) (Peptostreptococcus magnus).